The following is a 200-amino-acid chain: Glycerol-3-phosphate acyltransferase (200 aa).

5 helical membrane-spanning segments follow: residues 2-22, 51-71, 84-104, 114-134, and 158-178; these read FNIP…AVIV, KAAA…VLLA, AIAA…FFGF, LGVL…IWLV, and LFFM…ILVL.

Belongs to the PlsY family. Probably interacts with PlsX.

Its subcellular location is the cell inner membrane. It carries out the reaction an acyl phosphate + sn-glycerol 3-phosphate = a 1-acyl-sn-glycero-3-phosphate + phosphate. It participates in lipid metabolism; phospholipid metabolism. Catalyzes the transfer of an acyl group from acyl-phosphate (acyl-PO(4)) to glycerol-3-phosphate (G3P) to form lysophosphatidic acid (LPA). This enzyme utilizes acyl-phosphate as fatty acyl donor, but not acyl-CoA or acyl-ACP. This Neisseria meningitidis serogroup A / serotype 4A (strain DSM 15465 / Z2491) protein is Glycerol-3-phosphate acyltransferase.